The primary structure comprises 412 residues: Transforming growth factor beta-3 proprotein (412 aa).

The N-terminal stretch at 1-23 is a signal peptide; the sequence is MKMHLQRALVVLALLNLATVSLS. N-linked (GlcNAc...) asparagine glycosylation is found at asparagine 74, asparagine 135, and asparagine 142. The Cell attachment site signature appears at 261 to 263; it reads RGD. Position 293 is an N5-methylglutamine (glutamine 293). Cystine bridges form between cysteine 307–cysteine 316, cysteine 315–cysteine 378, cysteine 344–cysteine 409, and cysteine 348–cysteine 411.

This sequence belongs to the TGF-beta family. Interacts with ASPN. Latency-associated peptide: Homodimer; disulfide-linked. Latency-associated peptide: Interacts with Transforming growth factor beta-3 (TGF-beta-3) chain; interaction is non-covalent and maintains (TGF-beta-3) in a latent state. Latency-associated peptide: Interacts with LRRC32/GARP; leading to regulate activation of TGF-beta-3 and promote epithelial fusion during palate development. Latency-associated peptide: Interacts (via cell attachment site) with integrins, leading to release of the active TGF-beta-3. Transforming growth factor beta-3: Homodimer; disulfide-linked. Transforming growth factor beta-3: Interacts with TGF-beta receptors (TGFBR1 and TGFBR2), leading to signal transduction. In terms of processing, transforming growth factor beta-3 proprotein: The precursor proprotein is cleaved in the Golgi apparatus to form Transforming growth factor beta-3 (TGF-beta-3) and Latency-associated peptide (LAP) chains, which remain non-covalently linked, rendering TGF-beta-3 inactive. Post-translationally, methylated at Gln-293 by N6AMT1. In terms of tissue distribution, expressed in cardiomyocytes.

Its subcellular location is the secreted. The protein resides in the extracellular space. It is found in the extracellular matrix. Transforming growth factor beta-3 proprotein: Precursor of the Latency-associated peptide (LAP) and Transforming growth factor beta-3 (TGF-beta-3) chains, which constitute the regulatory and active subunit of TGF-beta-3, respectively. In terms of biological role, required to maintain the Transforming growth factor beta-3 (TGF-beta-3) chain in a latent state during storage in extracellular matrix. Associates non-covalently with TGF-beta-3 and regulates its activation via interaction with 'milieu molecules', such as LTBP1 and LRRC32/GARP, that control activation of TGF-beta-3. Interaction with integrins results in distortion of the Latency-associated peptide chain and subsequent release of the active TGF-beta-3. Its function is as follows. Transforming growth factor beta-3: Multifunctional protein that regulates embryogenesis and cell differentiation and is required in various processes such as secondary palate development. Activation into mature form follows different steps: following cleavage of the proprotein in the Golgi apparatus, Latency-associated peptide (LAP) and Transforming growth factor beta-3 (TGF-beta-3) chains remain non-covalently linked rendering TGF-beta-3 inactive during storage in extracellular matrix. At the same time, LAP chain interacts with 'milieu molecules', such as LTBP1 and LRRC32/GARP that control activation of TGF-beta-3 and maintain it in a latent state during storage in extracellular milieus. TGF-beta-3 is released from LAP by integrins: integrin-binding results in distortion of the LAP chain and subsequent release of the active TGF-beta-3. Once activated following release of LAP, TGF-beta-3 acts by binding to TGF-beta receptors (TGFBR1 and TGFBR2), which transduce signal. This is Transforming growth factor beta-3 proprotein (Tgfb3) from Rattus norvegicus (Rat).